The chain runs to 169 residues: Probable chemoreceptor glutamine deamidase CheD (169 aa).

The protein belongs to the CheD family.

The catalysed reaction is L-glutaminyl-[protein] + H2O = L-glutamyl-[protein] + NH4(+). Probably deamidates glutamine residues to glutamate on methyl-accepting chemotaxis receptors (MCPs), playing an important role in chemotaxis. The chain is Probable chemoreceptor glutamine deamidase CheD from Solibacter usitatus (strain Ellin6076).